Here is a 492-residue protein sequence, read N- to C-terminus: UDP-N-acetylmuramoyl-L-alanyl-D-glutamate--2,6-diaminopimelate ligase (492 aa).

Ser-30 is a binding site for UDP-N-acetyl-alpha-D-muramoyl-L-alanyl-D-glutamate. Residue 114-120 (GTNGKTS) participates in ATP binding. Residues 156 to 157 (TT), Ser-183, Gln-189, and Arg-191 each bind UDP-N-acetyl-alpha-D-muramoyl-L-alanyl-D-glutamate. Position 223 is an N6-carboxylysine (Lys-223). Residues Arg-389, 413 to 416 (DNPR), Gly-462, and Glu-466 contribute to the meso-2,6-diaminopimelate site. The Meso-diaminopimelate recognition motif motif lies at 413–416 (DNPR).

It belongs to the MurCDEF family. MurE subfamily. Mg(2+) is required as a cofactor. Carboxylation is probably crucial for Mg(2+) binding and, consequently, for the gamma-phosphate positioning of ATP.

Its subcellular location is the cytoplasm. The catalysed reaction is UDP-N-acetyl-alpha-D-muramoyl-L-alanyl-D-glutamate + meso-2,6-diaminopimelate + ATP = UDP-N-acetyl-alpha-D-muramoyl-L-alanyl-gamma-D-glutamyl-meso-2,6-diaminopimelate + ADP + phosphate + H(+). It functions in the pathway cell wall biogenesis; peptidoglycan biosynthesis. Catalyzes the addition of meso-diaminopimelic acid to the nucleotide precursor UDP-N-acetylmuramoyl-L-alanyl-D-glutamate (UMAG) in the biosynthesis of bacterial cell-wall peptidoglycan. This Neisseria meningitidis serogroup B (strain ATCC BAA-335 / MC58) protein is UDP-N-acetylmuramoyl-L-alanyl-D-glutamate--2,6-diaminopimelate ligase.